The following is a 151-amino-acid chain: MSIPFSNTHYRIPQGFGNLLEGLTREILREQPDNIPAFAAAYFESLLEKREKTNFDPAEWGSKVEDRFYNNHAFEEQEPPEKSDPKQEESQIPGKEEEASVTILDSSEEDKEKEEVAAVKIQAAFRGHVAREEVKKMKTDSLQNEEKEENK.

A compositionally biased stretch (basic and acidic residues) spans 68-98 (FYNNHAFEEQEPPEKSDPKQEESQIPGKEEE). Disordered stretches follow at residues 68–115 (FYNN…EKEE) and 130–151 (AREE…EENK). The IQ domain maps to 114–143 (EEVAAVKIQAAFRGHVAREEVKKMKTDSLQ).

Homodimer. May interact with ROPN1. Testis- and sperm-specific.

The protein localises to the membrane. Sperm surface zona pellucida binding protein. Helps to bind spermatozoa to the zona pellucida with high affinity. Might function in binding zona pellucida and carbohydrates. This is Sperm surface protein Sp17 (SPA17) from Macaca fascicularis (Crab-eating macaque).